The chain runs to 288 residues: Probable sulfate transport system permease protein cysT (288 aa).

Helical transmembrane passes span 2 to 22 (IPLFFIPPFIILFITKGKFRF), 28 to 48 (LVLACALHYGTFILALPIFFL), 77 to 97 (FLTALLATIINAIFGLILAWV), 112 to 132 (TVDLPFALPTSVGGLTLMTVF), 149 to 169 (IVFNPIGVLLAMIFVSLPFVV), 196 to 218 (TTFWHILFPPLTPSLLTGTTLGF), 227 to 247 (SIVLIASNIPMKDLVISVLLF), and 257 to 277 (SATIIASFVLIISFTALFFIN). The 205-residue stretch at 73-277 (YGFTFLTALL…ISFTALFFIN (205 aa)) folds into the ABC transmembrane type-1 domain.

Belongs to the binding-protein-dependent transport system permease family. CysTW subfamily.

The protein localises to the plastid. It localises to the chloroplast membrane. In terms of biological role, part of the ABC transporter complex cysAWTP (TC 3.A.1.6.1) involved in sulfate/thiosulfate import. Probably responsible for the translocation of the substrate across the membrane. The sequence is that of Probable sulfate transport system permease protein cysT (cysT) from Marchantia polymorpha (Common liverwort).